A 175-amino-acid polypeptide reads, in one-letter code: Dual-action ribosomal maturation protein DarP (175 aa).

This sequence belongs to the DarP family.

The protein resides in the cytoplasm. Its function is as follows. Member of a network of 50S ribosomal subunit biogenesis factors which assembles along the 30S-50S interface, preventing incorrect 23S rRNA structures from forming. Promotes peptidyl transferase center (PTC) maturation. The polypeptide is Dual-action ribosomal maturation protein DarP (Vibrio parahaemolyticus serotype O3:K6 (strain RIMD 2210633)).